Consider the following 882-residue polypeptide: Homeobox-leucine zipper protein ROC3 (882 aa).

The interval 104-144 (DVDDDHKPQHSGHDQPPDAAQPSGAAGGNAKKKRYHRHTAH) is disordered. Residues 107 to 119 (DDHKPQHSGHDQP) show a composition bias toward basic and acidic residues. The span at 133 to 143 (AKKKRYHRHTA) shows a compositional bias: basic residues. Residues 134–193 (KKKRYHRHTAHQIQQMEALFKECPHPDDKQRLKLSQELGLKPRQVKFWFQNRRTQMKAQQ) constitute a DNA-binding region (homeobox). The stretch at 200–263 (ILRAENENLK…LDRLACIATR (64 aa)) forms a coiled coil. The START domain occupies 340–584 (QEQDKQLVVD…LQRQCERLAS (245 aa)). Low complexity predominate over residues 782-816 (AAAPTISSSTTTTTGNGNGETSSTPPRNSSSNNNN). The interval 782–820 (AAAPTISSSTTTTTGNGNGETSSTPPRNSSSNNNNADEL) is disordered.

The protein belongs to the HD-ZIP homeobox family. Class IV subfamily.

Its subcellular location is the nucleus. Functionally, probable transcription factor. In Oryza sativa subsp. indica (Rice), this protein is Homeobox-leucine zipper protein ROC3 (ROC3).